The primary structure comprises 485 residues: P2X purinoceptor 2 (485 aa).

Residues 1 to 43 are Cytoplasmic-facing; sequence MAAAQPRLPAGAAMVRRLARGCWSAFWDYETPKVIVVRNRRLG. Cystine bridges form between Cys-22–Cys-443, Cys-126–Cys-177, Cys-137–Cys-160, Cys-143–Cys-171, Cys-227–Cys-237, and Cys-271–Cys-280. The chain crosses the membrane as a helical span at residues 44–64; it reads FVHRMVQLLILLYFVWYVFIV. Residues 65 to 339 are Extracellular-facing; the sequence is QKSYQDSETG…IVHGQAGKFS (275 aa). ATP is bound by residues Lys-82 and Lys-84. Asn-195 is a glycosylation site (N-linked (GlcNAc...) asparagine). Thr-197 contacts ATP. An N-linked (GlcNAc...) asparagine glycan is attached at Asn-252. Residues Ser-297, Asn-301, and Arg-303 each coordinate ATP. N-linked (GlcNAc...) asparagine glycosylation is present at Asn-311. Lys-321 is an ATP binding site. Positions 322–335 are pore-forming motif; the sequence is AYGIRIDVIVHGQA. Residues 340–360 traverse the membrane as a helical segment; it reads LIPTIINLATALTSIGVGSFL. The Cytoplasmic portion of the chain corresponds to 361-485; the sequence is CDWILLTFMN…STDPKGLAQL (125 aa). The segment at 406–485 is disordered; sequence PPPSHYSQDQ…STDPKGLAQL (80 aa). The segment covering 420–436 has biased composition (low complexity); the sequence is PSGEGPALGEGAELPLA. Residues 469–478 are compositionally biased toward polar residues; the sequence is PSQQDSTSTD.

It belongs to the P2X receptor family. Homotrimer and heterotrimer; functional P2XRs are organized as homomeric and heteromeric trimers. Homotrimer. Forms heterotrimer with P2XR1. Forms heterotrimer with P2XR3. Forms heterotrimer with P2XR6.

It is found in the cell membrane. It carries out the reaction Ca(2+)(in) = Ca(2+)(out). The catalysed reaction is K(+)(in) = K(+)(out). It catalyses the reaction Na(+)(in) = Na(+)(out). Fast activation by external ATP. Exhibits slow desensitization during prolonged ATP activation. Not sensitive to the ATP agonist:alpha/beta-methylene-ATP. ATP-gated nonselective transmembrane cation channel permeable to potassium, sodium and calcium. Activation by extracellular ATP induces a variety of cellular responses, such as excitatory postsynaptic responses in sensory neurons, neuromuscular junctions (NMJ) formation, hearing, perception of taste and peristalsis. In the inner ear, regulates sound transduction and auditory neurotransmission, outer hair cell electromotility, inner ear gap junctions, and K(+) recycling. Mediates synaptic transmission between neurons and from neurons to smooth muscle. The sequence is that of P2X purinoceptor 2 (P2rx2) from Mus musculus (Mouse).